Reading from the N-terminus, the 132-residue chain is Small ribosomal subunit protein uS9 (132 aa).

It belongs to the universal ribosomal protein uS9 family.

This Mycoplasma genitalium (strain ATCC 33530 / DSM 19775 / NCTC 10195 / G37) (Mycoplasmoides genitalium) protein is Small ribosomal subunit protein uS9 (rpsI).